A 700-amino-acid chain; its full sequence is Transketolase (700 aa).

Histidine 45 provides a ligand contact to substrate. Residues threonine 48, histidine 85, and 133–135 each bind thiamine diphosphate; that span reads GPL. Residue aspartate 177 participates in Mg(2+) binding. Residues glycine 178 and asparagine 207 each coordinate thiamine diphosphate. Asparagine 207 and isoleucine 209 together coordinate Mg(2+). Substrate-binding residues include histidine 283, arginine 378, and serine 405. Residue histidine 283 coordinates thiamine diphosphate. Glutamate 441 (proton donor) is an active-site residue. Phenylalanine 467 contacts thiamine diphosphate. Positions 491, 499, and 552 each coordinate substrate.

The protein belongs to the transketolase family. Homodimer. Mg(2+) serves as cofactor. Ca(2+) is required as a cofactor. Requires Mn(2+) as cofactor. It depends on Co(2+) as a cofactor. The cofactor is thiamine diphosphate.

The enzyme catalyses D-sedoheptulose 7-phosphate + D-glyceraldehyde 3-phosphate = aldehydo-D-ribose 5-phosphate + D-xylulose 5-phosphate. Functionally, catalyzes the transfer of a two-carbon ketol group from a ketose donor to an aldose acceptor, via a covalent intermediate with the cofactor thiamine pyrophosphate. The protein is Transketolase (tkt) of Mycobacterium bovis (strain ATCC BAA-935 / AF2122/97).